Consider the following 190-residue polypeptide: Peptidyl-tRNA hydrolase (190 aa).

Residue tyrosine 18 participates in tRNA binding. Histidine 23 serves as the catalytic Proton acceptor. 3 residues coordinate tRNA: tyrosine 69, asparagine 71, and asparagine 117.

The protein belongs to the PTH family. In terms of assembly, monomer.

It is found in the cytoplasm. The catalysed reaction is an N-acyl-L-alpha-aminoacyl-tRNA + H2O = an N-acyl-L-amino acid + a tRNA + H(+). In terms of biological role, hydrolyzes ribosome-free peptidyl-tRNAs (with 1 or more amino acids incorporated), which drop off the ribosome during protein synthesis, or as a result of ribosome stalling. Catalyzes the release of premature peptidyl moieties from peptidyl-tRNA molecules trapped in stalled 50S ribosomal subunits, and thus maintains levels of free tRNAs and 50S ribosomes. The chain is Peptidyl-tRNA hydrolase from Rhodococcus erythropolis (strain PR4 / NBRC 100887).